A 292-amino-acid polypeptide reads, in one-letter code: Histamine N-methyltransferase (292 aa).

Residue Glu28 coordinates substrate. Residues Gly60, Glu89, Gln94, Ser120, and Ile142 each coordinate S-adenosyl-L-methionine. Asn283 contacts substrate.

Belongs to the class I-like SAM-binding methyltransferase superfamily. HNMT family. In terms of assembly, monomer. In terms of tissue distribution, expressed in jejunum, brain &gt; lung, spleen, stomach &gt; liver, kidney.

Its subcellular location is the cytoplasm. The catalysed reaction is histamine + S-adenosyl-L-methionine = N(tau)-methylhistamine + S-adenosyl-L-homocysteine + H(+). Inactivates histamine by N-methylation. Plays an important role in degrading histamine and in regulating the airway response to histamine. This is Histamine N-methyltransferase (HNMT) from Cavia porcellus (Guinea pig).